The primary structure comprises 186 residues: High mobility group protein B4 (186 aa).

2 consecutive DNA-binding regions (HMG box) follow at residues 9–79 (PKAN…MNYV) and 93–161 (PRRP…ELYR). Residues 77–98 (NYVGKRKKRRKRDPQEPRRPPS) form a disordered region.

Belongs to the HMGB family.

The protein localises to the nucleus. The protein resides in the chromosome. The sequence is that of High mobility group protein B4 (HMGB4) from Homo sapiens (Human).